A 206-amino-acid chain; its full sequence is Uridine kinase (206 aa).

Gly11–Ser18 lines the ATP pocket.

This sequence belongs to the uridine kinase family.

It localises to the cytoplasm. The enzyme catalyses uridine + ATP = UMP + ADP + H(+). The catalysed reaction is cytidine + ATP = CMP + ADP + H(+). The protein operates within pyrimidine metabolism; CTP biosynthesis via salvage pathway; CTP from cytidine: step 1/3. It participates in pyrimidine metabolism; UMP biosynthesis via salvage pathway; UMP from uridine: step 1/1. The chain is Uridine kinase from Clostridium botulinum (strain Langeland / NCTC 10281 / Type F).